The following is a 501-amino-acid chain: uncharacterized protein (501 aa).

Belongs to the UbiD family.

This is an uncharacterized protein from Synechocystis sp. (strain ATCC 27184 / PCC 6803 / Kazusa).